Reading from the N-terminus, the 128-residue chain is Aspartate 1-decarboxylase (128 aa).

Ser25 serves as the catalytic Schiff-base intermediate with substrate; via pyruvic acid. The residue at position 25 (Ser25) is a Pyruvic acid (Ser). Thr57 provides a ligand contact to substrate. Tyr58 serves as the catalytic Proton donor. 73–75 is a binding site for substrate; the sequence is GAA.

It belongs to the PanD family. Heterooctamer of four alpha and four beta subunits. The cofactor is pyruvate. In terms of processing, is synthesized initially as an inactive proenzyme, which is activated by self-cleavage at a specific serine bond to produce a beta-subunit with a hydroxyl group at its C-terminus and an alpha-subunit with a pyruvoyl group at its N-terminus.

It is found in the cytoplasm. It carries out the reaction L-aspartate + H(+) = beta-alanine + CO2. The protein operates within cofactor biosynthesis; (R)-pantothenate biosynthesis; beta-alanine from L-aspartate: step 1/1. Its function is as follows. Catalyzes the pyruvoyl-dependent decarboxylation of aspartate to produce beta-alanine. This is Aspartate 1-decarboxylase from Chlorobium luteolum (strain DSM 273 / BCRC 81028 / 2530) (Pelodictyon luteolum).